The following is a 102-amino-acid chain: uncharacterized protein (102 aa).

Helical transmembrane passes span 38-58 (FYVWSSRIYVLVLVVQAQLIL) and 64-84 (VLFLLLFFLHNFFLLPQLFQF).

The protein localises to the membrane. This is an uncharacterized protein from Saccharomyces cerevisiae (strain ATCC 204508 / S288c) (Baker's yeast).